Here is a 433-residue protein sequence, read N- to C-terminus: 23S rRNA (uracil(1939)-C(5))-methyltransferase RlmD (433 aa).

In terms of domain architecture, TRAM spans 10–68 (RTTTRQIITVSVNDLDSFGQGVARHNGKTLFIPGLLPQENAEVTVTEDKKQYARAKVVR). Interaction with RNA regions lie at residues 23-40 (DLDSFGQGVARHNGKTLF) and 58-63 (KKQYAR). Positions 81, 87, 90, and 162 each coordinate [4Fe-4S] cluster. The S-adenosyl-L-methionine site is built by Gln265, Phe294, Asn299, Glu315, Asn342, and Asp363. Cys389 functions as the Nucleophile in the catalytic mechanism.

Belongs to the class I-like SAM-binding methyltransferase superfamily. RNA M5U methyltransferase family. RlmD subfamily.

The catalysed reaction is uridine(1939) in 23S rRNA + S-adenosyl-L-methionine = 5-methyluridine(1939) in 23S rRNA + S-adenosyl-L-homocysteine + H(+). Its function is as follows. Catalyzes the formation of 5-methyl-uridine at position 1939 (m5U1939) in 23S rRNA. This Escherichia coli (strain K12) protein is 23S rRNA (uracil(1939)-C(5))-methyltransferase RlmD.